The following is a 393-amino-acid chain: NAD(P)H-quinone oxidoreductase subunit H, chloroplastic (393 aa).

The protein belongs to the complex I 49 kDa subunit family. In terms of assembly, NDH is composed of at least 16 different subunits, 5 of which are encoded in the nucleus.

The protein localises to the plastid. It is found in the chloroplast thylakoid membrane. The catalysed reaction is a plastoquinone + NADH + (n+1) H(+)(in) = a plastoquinol + NAD(+) + n H(+)(out). The enzyme catalyses a plastoquinone + NADPH + (n+1) H(+)(in) = a plastoquinol + NADP(+) + n H(+)(out). Its function is as follows. NDH shuttles electrons from NAD(P)H:plastoquinone, via FMN and iron-sulfur (Fe-S) centers, to quinones in the photosynthetic chain and possibly in a chloroplast respiratory chain. The immediate electron acceptor for the enzyme in this species is believed to be plastoquinone. Couples the redox reaction to proton translocation, and thus conserves the redox energy in a proton gradient. In Oenothera biennis (German evening primrose), this protein is NAD(P)H-quinone oxidoreductase subunit H, chloroplastic.